Consider the following 359-residue polypeptide: Type II restriction enzyme HgiDI (359 aa).

The enzyme catalyses Endonucleolytic cleavage of DNA to give specific double-stranded fragments with terminal 5'-phosphates.. A P subtype restriction enzyme that recognizes the double-stranded sequence 5'-GRCGYC-3' and cleaves after R-2. The chain is Type II restriction enzyme HgiDI from Herpetosiphon aurantiacus (Herpetosiphon giganteus).